We begin with the raw amino-acid sequence, 1437 residues long: Gag-Pol polyprotein (1437 aa).

A lipid anchor (N-myristoyl glycine; by host) is attached at Gly2. The interval 7–31 is interaction with Gp41; it reads VLSGGELDKWEKIRLRPGGKKKYKL. The tract at residues 8 to 43 is interaction with host CALM1; it reads LSGGELDKWEKIRLRPGGKKKYKLKHIVWASRELER. The interaction with host AP3D1 stretch occupies residues 12-19; sequence ELDKWEKI. The interval 14 to 33 is interaction with membrane phosphatidylinositol 4,5-bisphosphate and RNA; the sequence is DKWEKIRLRPGGKKKYKLKH. Residues 16-22 carry the Nuclear export signal motif; that stretch reads WEKIRLR. The Nuclear localization signal motif lies at 26–32; that stretch reads KKKYKLK. Residues 73–77 are interaction with membrane phosphatidylinositol 4,5-bisphosphate; the sequence is EELRS. Residues 106–129 are disordered; that stretch reads EEQNKSKKKAQQAAAAAGTGNSSQ. Tyr134 is subject to Phosphotyrosine; by host. The tract at residues 191-229 is interaction with human PPIA/CYPA and NUP153; sequence NTVGGHQAAMQMLKETINEEAAEWDRVHPVHAGPIAPGQ. The dimerization/Multimerization of capsid protein p24 stretch occupies residues 279–365; the sequence is YSPTSILDIR…GGPGHKARVL (87 aa). 2 CCHC-type zinc fingers span residues 392–409 and 413–430; these read VKCF…NCRA and KGCW…DCTE. Positions 491-495 are dimerization of protease; sequence PQITL. In terms of domain architecture, Peptidase A2 spans 510–579; sequence KEALLDTGAD…TPVNIIGRNL (70 aa). Asp515 functions as the For protease activity; shared with dimeric partner in the catalytic mechanism. Dimerization of protease regions lie at residues 539–545 and 578–590; these read GIGGFIK and NLLT…LNFP. The Reverse transcriptase domain maps to 633-823; sequence EGKISKIGPE…PPFLWMGYEL (191 aa). Asp699, Asp774, and Asp775 together coordinate Mg(2+). The tract at residues 816 to 824 is RT 'primer grip'; that stretch reads FLWMGYELH. The Tryptophan repeat motif signature appears at 987-1003; it reads WEAWWMEYWQATWIPEW. Residues 1023–1146 enclose the RNase H type-1 domain; it reads IVGAETFYVD…VDKLVSAGIR (124 aa). Mg(2+)-binding residues include Asp1032, Glu1067, Asp1087, and Asp1138. The segment at 1152-1193 adopts an Integrase-type zinc-finger fold; it reads NGIDKAQEEHEKYHSNWRAMASDFNLPPVVAKEIVASCDKCQ. 4 residues coordinate Zn(2+): His1161, His1165, Cys1189, and Cys1192. An Integrase catalytic domain is found at 1203–1353; it reads VDCSPGIWQL…SAGERIVDII (151 aa). Positions 1213, 1265, and 1301 each coordinate Mg(2+). A DNA-binding region (integrase-type) is located at residues 1372–1419; the sequence is FRVYYRDNKDPLWKGPAKLLWKGEGAVVIQDNSDIKVVPRRKAKIIRD.

As to quaternary structure, homotrimer; further assembles as hexamers of trimers. Interacts with gp41 (via C-terminus). Interacts with host CALM1; this interaction induces a conformational change in the Matrix protein, triggering exposure of the myristate group. Interacts with host AP3D1; this interaction allows the polyprotein trafficking to multivesicular bodies during virus assembly. Part of the pre-integration complex (PIC) which is composed of viral genome, matrix protein, Vpr and integrase. Homodimer; the homodimer further multimerizes as homohexamers or homopentamers. Interacts with human PPIA/CYPA; This interaction stabilizes the capsid. Interacts with human NUP153. Interacts with host PDZD8; this interaction stabilizes the capsid. Interacts with monkey TRIM5; this interaction destabilizes the capsid. In terms of assembly, homodimer, whose active site consists of two apposed aspartic acid residues. As to quaternary structure, heterodimer of p66 RT and p51 RT (RT p66/p51). Heterodimerization of RT is essential for DNA polymerase activity. The overall folding of the subdomains is similar in p66 RT and p51 RT but the spatial arrangements of the subdomains are dramatically different. Homotetramer; may further associate as a homohexadecamer. Part of the pre-integration complex (PIC) which is composed of viral genome, matrix protein, Vpr and integrase. Interacts with human SMARCB1/INI1 and human PSIP1/LEDGF isoform 1. Interacts with human KPNA3; this interaction might play a role in nuclear import of the pre-integration complex. Interacts with human NUP153; this interaction might play a role in nuclear import of the pre-integration complex. It depends on Mg(2+) as a cofactor. In terms of processing, specific enzymatic cleavages by the viral protease yield mature proteins. The protease is released by autocatalytic cleavage. The polyprotein is cleaved during and after budding, this process is termed maturation. Proteolytic cleavage of p66 RT removes the RNase H domain to yield the p51 RT subunit. Nucleocapsid protein p7 might be further cleaved after virus entry. Post-translationally, tyrosine phosphorylated presumably in the virion by a host kinase. Phosphorylation is apparently not a major regulator of membrane association. Phosphorylated possibly by host MAPK1; this phosphorylation is necessary for Pin1-mediated virion uncoating. In terms of processing, methylated by host PRMT6, impairing its function by reducing RNA annealing and the initiation of reverse transcription.

The protein localises to the host cell membrane. The protein resides in the host endosome. Its subcellular location is the host multivesicular body. It localises to the virion membrane. It is found in the host nucleus. The protein localises to the host cytoplasm. The protein resides in the virion. It carries out the reaction Specific for a P1 residue that is hydrophobic, and P1' variable, but often Pro.. The enzyme catalyses Endohydrolysis of RNA in RNA/DNA hybrids. Three different cleavage modes: 1. sequence-specific internal cleavage of RNA. Human immunodeficiency virus type 1 and Moloney murine leukemia virus enzymes prefer to cleave the RNA strand one nucleotide away from the RNA-DNA junction. 2. RNA 5'-end directed cleavage 13-19 nucleotides from the RNA end. 3. DNA 3'-end directed cleavage 15-20 nucleotides away from the primer terminus.. It catalyses the reaction 3'-end directed exonucleolytic cleavage of viral RNA-DNA hybrid.. The catalysed reaction is DNA(n) + a 2'-deoxyribonucleoside 5'-triphosphate = DNA(n+1) + diphosphate. Protease: The viral protease is inhibited by many synthetic protease inhibitors (PIs), such as amprenavir, atazanavir, indinavir, loprinavir, nelfinavir, ritonavir and saquinavir. Use of protease inhibitors in tritherapy regimens permit more ambitious therapeutic strategies. Reverse transcriptase/ribonuclease H: RT can be inhibited either by nucleoside RT inhibitors (NRTIs) or by non nucleoside RT inhibitors (NNRTIs). NRTIs act as chain terminators, whereas NNRTIs inhibit DNA polymerization by binding a small hydrophobic pocket near the RT active site and inducing an allosteric change in this region. Classical NRTIs are abacavir, adefovir (PMEA), didanosine (ddI), lamivudine (3TC), stavudine (d4T), tenofovir (PMPA), zalcitabine (ddC), and zidovudine (AZT). Classical NNRTIs are atevirdine (BHAP U-87201E), delavirdine, efavirenz (DMP-266), emivirine (I-EBU), and nevirapine (BI-RG-587). The tritherapies used as a basic effective treatment of AIDS associate two NRTIs and one NNRTI. Mediates, with Gag polyprotein, the essential events in virion assembly, including binding the plasma membrane, making the protein-protein interactions necessary to create spherical particles, recruiting the viral Env proteins, and packaging the genomic RNA via direct interactions with the RNA packaging sequence (Psi). Gag-Pol polyprotein may regulate its own translation, by the binding genomic RNA in the 5'-UTR. At low concentration, the polyprotein would promote translation, whereas at high concentration, the polyprotein would encapsidate genomic RNA and then shut off translation. Functionally, targets the polyprotein to the plasma membrane via a multipartite membrane-binding signal, that includes its myristoylated N-terminus. Matrix protein is part of the pre-integration complex. Implicated in the release from host cell mediated by Vpu. Binds to RNA. In terms of biological role, forms the conical core that encapsulates the genomic RNA-nucleocapsid complex in the virion. Most core are conical, with only 7% tubular. The core is constituted by capsid protein hexamer subunits. The core is disassembled soon after virion entry. Host restriction factors such as TRIM5-alpha or TRIMCyp bind retroviral capsids and cause premature capsid disassembly, leading to blocks in reverse transcription. Capsid restriction by TRIM5 is one of the factors which restricts HIV-1 to the human species. Host PIN1 apparently facilitates the virion uncoating. On the other hand, interactions with PDZD8 or CYPA stabilize the capsid. Its function is as follows. Encapsulates and protects viral dimeric unspliced genomic RNA (gRNA). Binds these RNAs through its zinc fingers. Acts as a nucleic acid chaperone which is involved in rearangement of nucleic acid secondary structure during gRNA retrotranscription. Also facilitates template switch leading to recombination. As part of the polyprotein, participates in gRNA dimerization, packaging, tRNA incorporation and virion assembly. Aspartyl protease that mediates proteolytic cleavages of Gag and Gag-Pol polyproteins during or shortly after the release of the virion from the plasma membrane. Cleavages take place as an ordered, step-wise cascade to yield mature proteins. This process is called maturation. Displays maximal activity during the budding process just prior to particle release from the cell. Also cleaves Nef and Vif, probably concomitantly with viral structural proteins on maturation of virus particles. Hydrolyzes host EIF4GI and PABP1 in order to shut off the capped cellular mRNA translation. The resulting inhibition of cellular protein synthesis serves to ensure maximal viral gene expression and to evade host immune response. Also mediates cleavage of host YTHDF3. Mediates cleavage of host CARD8, thereby activating the CARD8 inflammasome, leading to the clearance of latent HIV-1 in patient CD4(+) T-cells after viral reactivation; in contrast, HIV-1 can evade CARD8-sensing when its protease remains inactive in infected cells prior to viral budding. Functionally, multifunctional enzyme that converts the viral RNA genome into dsDNA in the cytoplasm, shortly after virus entry into the cell. This enzyme displays a DNA polymerase activity that can copy either DNA or RNA templates, and a ribonuclease H (RNase H) activity that cleaves the RNA strand of RNA-DNA heteroduplexes in a partially processive 3' to 5' endonucleasic mode. Conversion of viral genomic RNA into dsDNA requires many steps. A tRNA(3)-Lys binds to the primer-binding site (PBS) situated at the 5'-end of the viral RNA. RT uses the 3' end of the tRNA primer to perform a short round of RNA-dependent minus-strand DNA synthesis. The reading proceeds through the U5 region and ends after the repeated (R) region which is present at both ends of viral RNA. The portion of the RNA-DNA heteroduplex is digested by the RNase H, resulting in a ssDNA product attached to the tRNA primer. This ssDNA/tRNA hybridizes with the identical R region situated at the 3' end of viral RNA. This template exchange, known as minus-strand DNA strong stop transfer, can be either intra- or intermolecular. RT uses the 3' end of this newly synthesized short ssDNA to perform the RNA-dependent minus-strand DNA synthesis of the whole template. RNase H digests the RNA template except for two polypurine tracts (PPTs) situated at the 5'-end and near the center of the genome. It is not clear if both polymerase and RNase H activities are simultaneous. RNase H probably can proceed both in a polymerase-dependent (RNA cut into small fragments by the same RT performing DNA synthesis) and a polymerase-independent mode (cleavage of remaining RNA fragments by free RTs). Secondly, RT performs DNA-directed plus-strand DNA synthesis using the PPTs that have not been removed by RNase H as primers. PPTs and tRNA primers are then removed by RNase H. The 3' and 5' ssDNA PBS regions hybridize to form a circular dsDNA intermediate. Strand displacement synthesis by RT to the PBS and PPT ends produces a blunt ended, linear dsDNA copy of the viral genome that includes long terminal repeats (LTRs) at both ends. In terms of biological role, catalyzes viral DNA integration into the host chromosome, by performing a series of DNA cutting and joining reactions. This enzyme activity takes place after virion entry into a cell and reverse transcription of the RNA genome in dsDNA. The first step in the integration process is 3' processing. This step requires a complex comprising the viral genome, matrix protein, Vpr and integrase. This complex is called the pre-integration complex (PIC). The integrase protein removes 2 nucleotides from each 3' end of the viral DNA, leaving recessed CA OH's at the 3' ends. In the second step, the PIC enters cell nucleus. This process is mediated through integrase and Vpr proteins, and allows the virus to infect a non dividing cell. This ability to enter the nucleus is specific of lentiviruses, other retroviruses cannot and rely on cell division to access cell chromosomes. In the third step, termed strand transfer, the integrase protein joins the previously processed 3' ends to the 5' ends of strands of target cellular DNA at the site of integration. The 5'-ends are produced by integrase-catalyzed staggered cuts, 5 bp apart. A Y-shaped, gapped, recombination intermediate results, with the 5'-ends of the viral DNA strands and the 3' ends of target DNA strands remaining unjoined, flanking a gap of 5 bp. The last step is viral DNA integration into host chromosome. This involves host DNA repair synthesis in which the 5 bp gaps between the unjoined strands are filled in and then ligated. Since this process occurs at both cuts flanking the HIV genome, a 5 bp duplication of host DNA is produced at the ends of HIV-1 integration. Alternatively, Integrase may catalyze the excision of viral DNA just after strand transfer, this is termed disintegration. The sequence is that of Gag-Pol polyprotein (gag-pol) from Human immunodeficiency virus type 1 group M subtype B (isolate ARV2/SF2) (HIV-1).